The following is a 523-amino-acid chain: Putative UDP-glucuronosyltransferase ugt-50 (523 aa).

The first 25 residues, 1–25 (MHYSQMRWMFFCLTALLHGSFIVNA), serve as a signal peptide directing secretion. 4 N-linked (GlcNAc...) asparagine glycosylation sites follow: Asn84, Asn248, Asn283, and Asn487. A helical membrane pass occupies residues 490–508 (IIEHNHLDLFFYLCIISLL).

The protein belongs to the UDP-glycosyltransferase family.

Its subcellular location is the membrane. It catalyses the reaction glucuronate acceptor + UDP-alpha-D-glucuronate = acceptor beta-D-glucuronoside + UDP + H(+). The sequence is that of Putative UDP-glucuronosyltransferase ugt-50 (ugt-50) from Caenorhabditis elegans.